The primary structure comprises 86 residues: Large ribosomal subunit protein eL43 (86 aa).

Residues Cys-38, Cys-41, Cys-56, and Cys-59 each contribute to the Zn(2+) site. The C4-type zinc-finger motif lies at 38–59 (CPVCGRKAVRRISTGIWQCQKC).

It belongs to the eukaryotic ribosomal protein eL43 family. In terms of assembly, part of the 50S ribosomal subunit. It depends on Zn(2+) as a cofactor.

This chain is Large ribosomal subunit protein eL43, found in Thermococcus kodakarensis (strain ATCC BAA-918 / JCM 12380 / KOD1) (Pyrococcus kodakaraensis (strain KOD1)).